We begin with the raw amino-acid sequence, 43 residues long: Structural protein ORF5a (43 aa).

A helical transmembrane segment spans residues 2–22; sequence FSQIGAFLDSALLLLVAFFAV.

This sequence belongs to the arteriviridae ORF5a protein family. Interacts with proteins GP2B and GP4.

It is found in the virion. It localises to the host cell membrane. Its function is as follows. Minor virion component that plays an essential role in virus infectivity. The polypeptide is Structural protein ORF5a (Sus scrofa (Pig)).